Reading from the N-terminus, the 80-residue chain is MASFKLWVCLILLLLEFSVHQCRPLVAEESPSDSGNIRKIMRELLKRSEELKVRSKDGQTVLGTLDSKRLSPGGPDPRHH.

A signal peptide spans 1 to 22; it reads MASFKLWVCLILLLLEFSVHQC. The tract at residues 55-80 is disordered; sequence SKDGQTVLGTLDSKRLSPGGPDPRHH. Residues P72 and P75 each carry the hydroxyproline modification. O-linked (Ara...) hydroxyproline glycosylation occurs at P75.

It belongs to the CLV3/ESR signal peptide family. In terms of processing, the O-glycosylation (arabinosylation) of the hydroxyproline Pro-75 enhances binding affinity of the CLE4p peptide for its receptor. Expressed in roots and seedlings.

Its subcellular location is the secreted. It is found in the extracellular space. Functionally, extracellular signal peptide that regulates cell fate. This Arabidopsis thaliana (Mouse-ear cress) protein is CLAVATA3/ESR (CLE)-related protein 4.